The primary structure comprises 130 residues: Iron-sulfur cluster insertion protein ErpA (130 aa).

Iron-sulfur cluster-binding residues include cysteine 58, cysteine 122, and cysteine 124.

The protein belongs to the HesB/IscA family. In terms of assembly, homodimer. Iron-sulfur cluster serves as cofactor.

Functionally, required for insertion of 4Fe-4S clusters for at least IspG. The protein is Iron-sulfur cluster insertion protein ErpA of Stenotrophomonas maltophilia (strain R551-3).